The following is a 186-amino-acid chain: Adenylate kinase (186 aa).

Residue 10–15 participates in ATP binding; that stretch reads GSGKGT. Positions 30 to 55 are NMP; the sequence is ATGDVFRERMKTDMALRDIVSSGGYV. Residues Thr31, Arg36, 53–55, 81–84, and Gln88 each bind AMP; these read GYV and GYPR. Residues 122–132 form an LID region; that stretch reads ARSKESGRTDD. An ATP-binding site is contributed by Arg123. Residues Arg129 and Arg140 each contribute to the AMP site. An ATP-binding site is contributed by Lys168.

It belongs to the adenylate kinase family. Monomer.

It localises to the cytoplasm. It catalyses the reaction AMP + ATP = 2 ADP. It participates in purine metabolism; AMP biosynthesis via salvage pathway; AMP from ADP: step 1/1. Catalyzes the reversible transfer of the terminal phosphate group between ATP and AMP. Plays an important role in cellular energy homeostasis and in adenine nucleotide metabolism. In Tropheryma whipplei (strain TW08/27) (Whipple's bacillus), this protein is Adenylate kinase.